The following is a 325-amino-acid chain: tRNA U34 carboxymethyltransferase (325 aa).

Carboxy-S-adenosyl-L-methionine contacts are provided by residues K91, W105, K110, G130, 152–154, 181–182, M197, Y201, and R316; these read DPS and ME.

Belongs to the class I-like SAM-binding methyltransferase superfamily. CmoB family. As to quaternary structure, homotetramer.

The enzyme catalyses carboxy-S-adenosyl-L-methionine + 5-hydroxyuridine(34) in tRNA = 5-carboxymethoxyuridine(34) in tRNA + S-adenosyl-L-homocysteine + H(+). Catalyzes carboxymethyl transfer from carboxy-S-adenosyl-L-methionine (Cx-SAM) to 5-hydroxyuridine (ho5U) to form 5-carboxymethoxyuridine (cmo5U) at position 34 in tRNAs. This chain is tRNA U34 carboxymethyltransferase, found in Saccharophagus degradans (strain 2-40 / ATCC 43961 / DSM 17024).